Here is a 481-residue protein sequence, read N- to C-terminus: Uridine 5'-monophosphate synthase (481 aa).

Positions 1–214 are OPRTase; it reads MEVASQALGP…VFSAANHNGL (214 aa). Y37 carries the phosphotyrosine modification. The segment at 215–220 is domain linker; it reads PPPEKK. An OMPdecase region spans residues 221–481; that stretch reads ACKELSFGAR…EAYLSRLAVQ (261 aa). S257 serves as a coordination point for orotidine 5'-phosphate. UMP is bound by residues S257, D259, and 281–283; that span reads KTH. Orotidine 5'-phosphate-binding positions include K281, K314, D317, T321, S372, 430–432, and 450–451; these read QQY and GR. Residues K314 and D317 each act as for OMPdecase activity in the active site. UMP is bound by residues D317, T321, S372, 430 to 432, and 450 to 451; these read QQY and GR.

This sequence in the N-terminal section; belongs to the purine/pyrimidine phosphoribosyltransferase family. In the C-terminal section; belongs to the OMP decarboxylase family. As to quaternary structure, homodimer; dimerization is required for enzymatic activity.

It carries out the reaction orotidine 5'-phosphate + diphosphate = orotate + 5-phospho-alpha-D-ribose 1-diphosphate. The catalysed reaction is orotidine 5'-phosphate + H(+) = UMP + CO2. It participates in pyrimidine metabolism; UMP biosynthesis via de novo pathway; UMP from orotate: step 1/2. Its pathway is pyrimidine metabolism; UMP biosynthesis via de novo pathway; UMP from orotate: step 2/2. In terms of biological role, bifunctional enzyme catalyzing the last two steps of de novo pyrimidine biosynthesis, orotate phosphoribosyltransferase (OPRT), which converts orotate to orotidine-5'-monophosphate (OMP), and orotidine-5'-monophosphate decarboxylase (ODC), the terminal enzymatic reaction that decarboxylates OMP to uridine monophosphate (UMP). This chain is Uridine 5'-monophosphate synthase (Umps), found in Mus musculus (Mouse).